The primary structure comprises 466 residues: Na(+)/H(+) antiporter NhaA (466 aa).

The next 11 membrane-spanning stretches (helical) occupy residues 32–52 (VGGV…NVPA), 74–94 (LSVQ…VAGI), 111–131 (AALP…VYTL), 142–162 (GWAV…AVIG), 172–192 (FLLT…AVFF), 195–215 (DLNF…WLLL), 221–241 (GWYV…NSGI), 280–300 (GLAV…GGAL), 310–330 (LGVV…GTWL), 348–368 (VFAV…IGEL), and 379–399 (EVKA…TTLL).

Belongs to the NhaA Na(+)/H(+) (TC 2.A.33) antiporter family.

The protein resides in the cell membrane. The enzyme catalyses Na(+)(in) + 2 H(+)(out) = Na(+)(out) + 2 H(+)(in). Functionally, na(+)/H(+) antiporter that extrudes sodium in exchange for external protons. The chain is Na(+)/H(+) antiporter NhaA from Streptomyces avermitilis (strain ATCC 31267 / DSM 46492 / JCM 5070 / NBRC 14893 / NCIMB 12804 / NRRL 8165 / MA-4680).